Reading from the N-terminus, the 127-residue chain is uncharacterized protein (127 aa).

This is an uncharacterized protein from Human cytomegalovirus (strain Toledo) (HHV-5).